Here is a 309-residue protein sequence, read N- to C-terminus: Glutamyl-Q tRNA(Asp) synthetase (309 aa).

L-glutamate contacts are provided by residues 8–12 (RFSPS) and Glu44. Positions 11–21 (PSPTGPLHAGS) match the 'HIGH' region motif. Zn(2+) is bound by residues Cys100, Cys102, Tyr126, and Cys130. L-glutamate-binding residues include Tyr205 and Arg223. The 'KMSKS' region motif lies at 261–265 (KLSKQ). Residue Lys264 participates in ATP binding.

The protein belongs to the class-I aminoacyl-tRNA synthetase family. GluQ subfamily. Zn(2+) serves as cofactor.

In terms of biological role, catalyzes the tRNA-independent activation of glutamate in presence of ATP and the subsequent transfer of glutamate onto a tRNA(Asp). Glutamate is transferred on the 2-amino-5-(4,5-dihydroxy-2-cyclopenten-1-yl) moiety of the queuosine in the wobble position of the QUC anticodon. This chain is Glutamyl-Q tRNA(Asp) synthetase, found in Albidiferax ferrireducens (strain ATCC BAA-621 / DSM 15236 / T118) (Rhodoferax ferrireducens).